The primary structure comprises 30 residues: Cyclotide mden-G (30 aa).

Positions 1-30 (GIPCAESCVYIPCITAALGCSCKNKVCYRN) form a cross-link, cyclopeptide (Gly-Asn). Intrachain disulfides connect Cys4/Cys20, Cys8/Cys22, and Cys13/Cys27.

This sequence belongs to the cyclotide family. Bracelet subfamily. In terms of processing, this is a cyclic peptide.

In terms of biological role, probably participates in a plant defense mechanism. The chain is Cyclotide mden-G from Melicytus dentatus (Tree violet).